The following is a 254-amino-acid chain: Triosephosphate isomerase 2 (254 aa).

9–11 (NMK) serves as a coordination point for substrate. His96 serves as the catalytic Electrophile. Residue Glu168 is the Proton acceptor of the active site. 2 residues coordinate substrate: Gly174 and Ser212.

The protein belongs to the triosephosphate isomerase family. Homodimer.

Its subcellular location is the cytoplasm. It carries out the reaction D-glyceraldehyde 3-phosphate = dihydroxyacetone phosphate. Its pathway is polyol metabolism; glycerol degradation. Involved in the glycerol metabolism. Catalyzes stereospecifically the conversion of dihydroxyacetone phosphate (DHAP) to D-glyceraldehyde-3-phosphate (G3P). The protein is Triosephosphate isomerase 2 of Listeria innocua serovar 6a (strain ATCC BAA-680 / CLIP 11262).